A 419-amino-acid polypeptide reads, in one-letter code: Hyaluronan synthase (419 aa).

5 helical membrane-spanning segments follow: residues 8 to 28 (LIVL…MYLF), 33 to 53 (VGIY…LSFL), 318 to 338 (IVAL…VAIG), 345 to 365 (AIQL…IVAL), and 376 to 396 (PASF…LQPL).

It belongs to the NodC/HAS family. Mg(2+) is required as a cofactor.

It is found in the cell membrane. The catalysed reaction is [hyaluronan](n) + UDP-N-acetyl-alpha-D-glucosamine = N-acetyl-beta-D-glucosaminyl-(1-&gt;4)-[hyaluronan](n) + UDP + H(+). The enzyme catalyses N-acetyl-beta-D-glucosaminyl-(1-&gt;4)-[hyaluronan](n) + UDP-alpha-D-glucuronate = [hyaluronan](n+1) + UDP + H(+). It functions in the pathway glycan biosynthesis; hyaluronan biosynthesis. Functionally, glycosaminoglycan synthesis. The hyaluronic acid capsule is involved in the pathogenicity of group A Streptococci; it may be the major virulence determinant. This chain is Hyaluronan synthase (hasA), found in Streptococcus pyogenes serotype M6 (strain ATCC BAA-946 / MGAS10394).